Consider the following 149-residue polypeptide: MADQLTEEQIAEFKEAFSLFDKDGDGTITTKELGTVMRSLGQNPTEAELQDMINEVDADGNGTIDFPEFLTMMARKMKETDSEEEIREAFRVFDKDGNGFISAAELRHVMTNLGEKLTDEEVDEMIREADIDGDGQVNYEEFVTMMTCK.

Position 2 is an N-acetylalanine (A2). 4 consecutive EF-hand domains span residues 8-43 (EQIA…LGQN), 44-79 (PTEA…KMKE), 81-116 (DSEE…LGEK), and 117-149 (LTDE…MTCK). Residues D21, D23, D25, T27, E32, D57, D59, N61, T63, E68, D94, D96, N98, and E105 each contribute to the Ca(2+) site. K116 carries the post-translational modification N6,N6,N6-trimethyllysine. Positions 130, 132, 134, 136, and 141 each coordinate Ca(2+).

It belongs to the calmodulin family.

In terms of biological role, calmodulin mediates the control of a large number of enzymes, ion channels and other proteins by Ca(2+). Among the enzymes to be stimulated by the calmodulin-Ca(2+) complex are a number of protein kinases and phosphatases. The sequence is that of Calmodulin-B from Halocynthia roretzi (Sea squirt).